Reading from the N-terminus, the 456-residue chain is Ribonuclease inhibitor (456 aa).

Residue Met1 is modified to N-acetylmethionine. LRR repeat units lie at residues 15–43 (WTELLPLLQQYEVVRLDDCGLTEEHCKDI), 44–71 (GSALRANPSLTELCLRTNELGDAGVHLV), 72–100 (LQGLQSPTCKIQKLSLQNCSLTEAGCGVL), 101–128 (PSTLRSLPTLRELHLSDNPLGDAGLRLL), 129–157 (CEGLLDPQCHLEKLQLEYCRLTAASCEPL), 158–185 (ASVLRATRALKELTVSNNDIGEAGARVL), 186–214 (GQGLADSACQLETLRLENCGLTPANCKDL), 215–242 (CGIVASQASLRELDLGSNGLGDAGIAEL), 243–271 (CPGLLSPASRLKTLWLWECDITASGCRDL), 272–299 (CRVLQAKETLKELSLAGNKLGDEGARLL), 300–328 (CESLLQPGCQLESLWVKSCSLTAACCQHV), 329–356 (SLMLTQNKHLLELQLSSNKLGDSGIQEL), 357–385 (CQALSQPGTTLRVLCLGDCEVTNSGCSSL), 386–413 (ASLLLANRSLRELDLSNNCVGDPGVLQL), and 414–442 (LGSLEQPGCALEQLVLYDTYWTEEVEDRL). A Phosphoserine modification is found at Ser86.

As to quaternary structure, forms high-affinity heterodimers with RNASE1, ANG and RNASE2.

It is found in the cytoplasm. The protein localises to the nucleus. Functionally, ribonuclease inhibitor which inhibits RNASE1, RNASE2 and angiogenin (ANG). May play a role in redox homeostasis. Required to inhibit the cytotoxic tRNA ribonuclease activity of ANG in the cytoplasm in absence of stress. Relocates to the nucleus in response to stress, relieving inhibition of ANG in the cytoplasm, and inhibiting the angiogenic activity of ANG in the nucleus. This chain is Ribonuclease inhibitor (RNH1), found in Sus scrofa (Pig).